Here is a 65-residue protein sequence, read N- to C-terminus: MPKMKTKSSAKKRFKFLGNGKVKRTHSHLRHILTKKTTKQKRNLRGTAIISSTDVKRVRAMMPTQ.

The protein belongs to the bacterial ribosomal protein bL35 family.

This Methylobacillus flagellatus (strain ATCC 51484 / DSM 6875 / VKM B-1610 / KT) protein is Large ribosomal subunit protein bL35.